The chain runs to 188 residues: MQFRGNVMQENQNQAAEAVENEMTETASAAHTELEQTPEQRIAGLEAEIAELNDTLLRARAELENQRRRAQDEVAAAHKYAIGKFAAELVTVKDYLEMALLDQSGQIDALKMGVDMTLKQLVSAFDKAQIKDIAPKLGDKLDPHQHQAMSAEESDAEPNTVVRVMQKGYLLADRVLRPAMVVVAKAKA.

Belongs to the GrpE family. As to quaternary structure, homodimer.

Its subcellular location is the cytoplasm. Functionally, participates actively in the response to hyperosmotic and heat shock by preventing the aggregation of stress-denatured proteins, in association with DnaK and GrpE. It is the nucleotide exchange factor for DnaK and may function as a thermosensor. Unfolded proteins bind initially to DnaJ; upon interaction with the DnaJ-bound protein, DnaK hydrolyzes its bound ATP, resulting in the formation of a stable complex. GrpE releases ADP from DnaK; ATP binding to DnaK triggers the release of the substrate protein, thus completing the reaction cycle. Several rounds of ATP-dependent interactions between DnaJ, DnaK and GrpE are required for fully efficient folding. The sequence is that of Protein GrpE from Chromobacterium violaceum (strain ATCC 12472 / DSM 30191 / JCM 1249 / CCUG 213 / NBRC 12614 / NCIMB 9131 / NCTC 9757 / MK).